Reading from the N-terminus, the 419-residue chain is uncharacterized protein (419 aa).

Transmembrane regions (helical) follow at residues 1-21, 24-44, 66-86, 101-121, 174-194, 216-236, 242-262, 280-300, 311-331, 349-369, and 396-416; these read MTTV…FLIL, VSPA…GGAD, ILAA…NSIT, ALAL…VAVI, SVMM…YFLA, NLPS…LLAL, IKVD…FCMG, PVAI…NSGL, SGLP…LATA, LELG…ATVF, and IPYE…IFGV.

It belongs to the CitM (TC 2.A.11) transporter family.

It is found in the cell membrane. This is an uncharacterized protein from Haemophilus influenzae (strain ATCC 51907 / DSM 11121 / KW20 / Rd).